The sequence spans 68 residues: Arabinogalactan peptide 1 (68 aa).

Residues 1–30 (MAGQLKSKIVAVAVAAVVVVASSLVGTASA) form the signal peptide. Residue Ser-40 is the site of GPI-anchor amidated serine attachment. Residues 41-68 (GATATAAAAPAFAAVSVAAAALGGYLFC) constitute a propeptide, removed in mature form.

The protein belongs to the AG-peptide AGP family. O-glycosylated on hydroxyprolines; noncontiguous hydroxylproline residues are glycosylated with arabinogalactan. In terms of tissue distribution, expressed in roots, stems, flowers and seeds.

It localises to the vacuole. It is found in the aleurone grain membrane. Its function is as follows. Proteoglycan that seems to be implicated in diverse developmental roles such as differentiation, cell-cell recognition, embryogenesis and programmed cell death. The protein is Arabinogalactan peptide 1 (AGPEP1) of Oryza sativa subsp. japonica (Rice).